A 292-amino-acid chain; its full sequence is Galactinol synthase 2 (292 aa).

Lys65 is an active-site residue. Residues Asp81, Asp83, and His218 each coordinate Mn(2+).

It belongs to the glycosyltransferase 8 family. Galactosyltransferase subfamily. Requires a divalent metal cation as cofactor. Present in phloem-associated intermediary cells. Weakly expressed in leaves.

Its subcellular location is the cytoplasm. The catalysed reaction is myo-inositol + UDP-alpha-D-galactose = alpha-D-galactosyl-(1-&gt;3)-1D-myo-inositol + UDP + H(+). In terms of biological role, may promote plant stress tolerance. Galactinol synthase mainly involved in the biosynthesis of transport raffinose family oligosaccharides (RFOs) that function as osmoprotectants. In Ajuga reptans (Bugle), this protein is Galactinol synthase 2 (GOLS2).